Here is a 173-residue protein sequence, read N- to C-terminus: Crossover junction endodeoxyribonuclease RuvC (173 aa).

Active-site residues include Asp8, Glu67, and Asp139. The Mg(2+) site is built by Asp8, Glu67, and Asp139.

Belongs to the RuvC family. In terms of assembly, homodimer which binds Holliday junction (HJ) DNA. The HJ becomes 2-fold symmetrical on binding to RuvC with unstacked arms; it has a different conformation from HJ DNA in complex with RuvA. In the full resolvosome a probable DNA-RuvA(4)-RuvB(12)-RuvC(2) complex forms which resolves the HJ. Mg(2+) serves as cofactor.

The protein localises to the cytoplasm. The enzyme catalyses Endonucleolytic cleavage at a junction such as a reciprocal single-stranded crossover between two homologous DNA duplexes (Holliday junction).. Its function is as follows. The RuvA-RuvB-RuvC complex processes Holliday junction (HJ) DNA during genetic recombination and DNA repair. Endonuclease that resolves HJ intermediates. Cleaves cruciform DNA by making single-stranded nicks across the HJ at symmetrical positions within the homologous arms, yielding a 5'-phosphate and a 3'-hydroxyl group; requires a central core of homology in the junction. The consensus cleavage sequence is 5'-(A/T)TT(C/G)-3'. Cleavage occurs on the 3'-side of the TT dinucleotide at the point of strand exchange. HJ branch migration catalyzed by RuvA-RuvB allows RuvC to scan DNA until it finds its consensus sequence, where it cleaves and resolves the cruciform DNA. The sequence is that of Crossover junction endodeoxyribonuclease RuvC from Aeromonas salmonicida (strain A449).